The primary structure comprises 797 residues: Xaa-Pro dipeptidyl-peptidase (797 aa).

Residues Ser370, Asp490, and His521 each act as charge relay system in the active site.

This sequence belongs to the peptidase S15 family. In terms of assembly, homodimer.

It is found in the cytoplasm. The catalysed reaction is Hydrolyzes Xaa-Pro-|- bonds to release unblocked, N-terminal dipeptides from substrates including Ala-Pro-|-p-nitroanilide and (sequentially) Tyr-Pro-|-Phe-Pro-|-Gly-Pro-|-Ile.. Functionally, removes N-terminal dipeptides sequentially from polypeptides having unsubstituted N-termini provided that the penultimate residue is proline. This Lacticaseibacillus casei (strain BL23) (Lactobacillus casei) protein is Xaa-Pro dipeptidyl-peptidase.